The sequence spans 154 residues: 17 kDa A-type inclusion protein (154 aa).

Residues Gln-17 to Tyr-85 adopt a coiled-coil conformation. Residues Ser-88–Phe-154 are disordered.

This is 17 kDa A-type inclusion protein from Bos taurus (Bovine).